A 508-amino-acid chain; its full sequence is Kinesin light chain 3 (508 aa).

Residues 1-20 (MSVQVAAPGSTGLGPERLNP) are disordered. A coiled-coil region spans residues 88–150 (LLALSAHVSV…EEEKSHLQFL (63 aa)). Residues 154–197 (RQYDPPEESQRPESPPRRDSLASLFPSEEEEKKGPEAAGAAAAQ) are disordered. Basic and acidic residues predominate over residues 161–173 (ESQRPESPPRRDS). S173 carries the post-translational modification Phosphoserine. TPR repeat units follow at residues 207 to 240 (LRTLHNLVIQYAGQGRYEVAVPLCRQALEDLERS), 249 to 282 (ATMLNILALVYRDQNKYKEATELLHDALQIREQT), 291 to 324 (AATLNNLAVLYGKRGRYREAEPLCQRALEIREKV), 333 to 366 (AKQLNNLALLCQNQGKFQDVERHYARALSIYEAL), and 375 to 408 (AKTKNNLASAYLKQNKYQQAEELYKEILSQEALP). A disordered region spans residues 409–441 (APLGAPQGGTAGDTQQQVLRRSSSFSKLRESIR). The span at 420–434 (GDTQQQVLRRSSSFS) shows a compositional bias: polar residues. At S467 the chain carries Phosphoserine. The interval 486 to 508 (LSTRHLSEAPRTLSISTQDLSPR) is disordered. Residues 498-508 (LSISTQDLSPR) are compositionally biased toward polar residues. Phosphothreonine is present on T502. Residue S506 is modified to Phosphoserine.

It belongs to the kinesin light chain family. Oligomer composed of two heavy chains and two light chains. Associates with microtubulin in an ATP-dependent manner. Interacts with KIF5C. Interacts with ODF1. Interacts with LRGUK. Interacts with VDAC2. Expressed in postmeiotic male germ cells (at protein level). Expressed in the testes (at protein level). Expressed in spleen, intestine, brain and ovary.

The protein localises to the cytoplasm. It localises to the cytoskeleton. The protein resides in the mitochondrion. In terms of biological role, kinesin is a microtubule-associated force-producing protein that may play a role in organelle transport. Plays a role during spermiogenesis in the development of the sperm tail midpiece and in the normal function of spermatozoa. May play a role in the formation of the mitochondrial sheath formation in the developing spermatid midpiece. The chain is Kinesin light chain 3 (Klc3) from Mus musculus (Mouse).